The primary structure comprises 513 residues: Steroid (22S)-hydroxylase (513 aa).

The helical transmembrane segment at 8 to 28 (TLLPLLLLPSLLSLLLFLILL) threads the bilayer. The segment at 252–277 (DIKEEDQEEEEVKTEDEAEMSKSDHV) is disordered. Positions 254–269 (KEEDQEEEEVKTEDEA) are enriched in acidic residues. C462 is a binding site for heme.

Belongs to the cytochrome P450 family. The cofactor is heme. Expressed in stems, leaves, shoots, and roots, with a higher expression in siliques and apical shoots.

The protein localises to the membrane. It carries out the reaction a C27-steroid + reduced [NADPH--hemoprotein reductase] + O2 = a (22S)-22-hydroxy C27-steroid + oxidized [NADPH--hemoprotein reductase] + H2O + H(+). The catalysed reaction is a C28-steroid + reduced [NADPH--hemoprotein reductase] + O2 = a (22S)-22-hydroxy C28-steroid + oxidized [NADPH--hemoprotein reductase] + H2O + H(+). It catalyses the reaction a C29-steroid + reduced [NADPH--hemoprotein reductase] + O2 = a (22S)-22-hydroxy C29-steroid + oxidized [NADPH--hemoprotein reductase] + H2O + H(+). The enzyme catalyses cholesterol + reduced [NADPH--hemoprotein reductase] + O2 = (22S)-22-hydroxycholesterol + oxidized [NADPH--hemoprotein reductase] + H2O + H(+). It carries out the reaction cholestanol + reduced [NADPH--hemoprotein reductase] + O2 = (22S)-22-hydroxycholestanol + oxidized [NADPH--hemoprotein reductase] + H2O + H(+). The catalysed reaction is campestanol + reduced [NADPH--hemoprotein reductase] + O2 = 6-deoxycathasterone + oxidized [NADPH--hemoprotein reductase] + H2O + H(+). It catalyses the reaction campesterol + reduced [NADPH--hemoprotein reductase] + O2 = (22S)-22-hydroxycampesterol + oxidized [NADPH--hemoprotein reductase] + H2O + H(+). The enzyme catalyses 6-oxocampestanol + reduced [NADPH--hemoprotein reductase] + O2 = cathasterone + oxidized [NADPH--hemoprotein reductase] + H2O + H(+). It carries out the reaction sitosterol + reduced [NADPH--hemoprotein reductase] + O2 = (22S)-22-hydroxysitosterol + oxidized [NADPH--hemoprotein reductase] + H2O + H(+). Its pathway is plant hormone biosynthesis; brassinosteroid biosynthesis. Catalyzes the C22-alpha-hydroxylation step in brassinosteroids biosynthesis. Converts campesterol (CR) to (22S)-22-hydroxycampesterol (22-OHCR, 22-hydroxyCR), campestanol (CN) to 6-deoxycathasterone (6-deoxoCT), and 6-oxocampestanol (6-oxoCN) to cathasterone (CT). Can also use cholesterol and cholestanol as substrates. This chain is Steroid (22S)-hydroxylase, found in Arabidopsis thaliana (Mouse-ear cress).